The sequence spans 944 residues: Leucine--tRNA ligase 2 (944 aa).

Residues 36 to 46 (PYPNSPFHLGH) carry the 'HIGH' region motif. The 'KMSKS' region signature appears at 621 to 625 (KMSKS). K624 provides a ligand contact to ATP.

It belongs to the class-I aminoacyl-tRNA synthetase family.

The protein resides in the cytoplasm. The catalysed reaction is tRNA(Leu) + L-leucine + ATP = L-leucyl-tRNA(Leu) + AMP + diphosphate. The sequence is that of Leucine--tRNA ligase 2 from Sulfurisphaera tokodaii (strain DSM 16993 / JCM 10545 / NBRC 100140 / 7) (Sulfolobus tokodaii).